Here is an 88-residue protein sequence, read N- to C-terminus: Protein GOLVEN 10 (88 aa).

The first 22 residues, Met-1–Ser-22, serve as a signal peptide directing secretion. Positions Arg-23–Ala-75 are excised as a propeptide. The interval Val-44–Asn-88 is disordered. Tyr-77 is subject to Sulfotyrosine. The residue at position 85 (Pro-85) is a Hydroxyproline.

The protein belongs to the RGF family. As to quaternary structure, binds to LRR receptor-like serine/threonine-protein kinases RGI1, RGI2 and RGI3 to trigger their dimerization with SERK proteins and subsequent signaling. In terms of tissue distribution, expressed in roots, shoots, leaves and flowers.

The protein localises to the secreted. Its subcellular location is the endoplasmic reticulum. Signaling peptide (root growth factor) that maintains the postembryonic root stem cell niche. Regulates the pattern of root growth and lateral root development by modulating the length and the number of cortical cells in the root apical meristem (RAM), and the anticlinal asymmetric cell divisions in lateral root initiation cells. This Arabidopsis thaliana (Mouse-ear cress) protein is Protein GOLVEN 10.